A 90-amino-acid chain; its full sequence is MVRPGLRSRSLRRVYRRTPGGSTVVHYERRKPGPARCARCGRPLGGVPRGRPPRVRRLSKTAKRPERPYGGVLCSTCLAEMIFEAIAGSS.

The interval alanine 38–proline 65 is disordered. A compositionally biased stretch (basic residues) spans arginine 51–alanine 62.

Belongs to the eukaryotic ribosomal protein eL34 family.

The sequence is that of Large ribosomal subunit protein eL34 (rpl34e) from Aeropyrum pernix (strain ATCC 700893 / DSM 11879 / JCM 9820 / NBRC 100138 / K1).